Reading from the N-terminus, the 631-residue chain is 1-deoxy-D-xylulose-5-phosphate synthase (631 aa).

Residues H73, 113 to 115, N174, Y285, and E367 contribute to the thiamine diphosphate site; that span reads SHA. Position 174 (N174) interacts with Mg(2+).

Belongs to the transketolase family. DXPS subfamily. As to quaternary structure, homodimer. Mg(2+) serves as cofactor. Requires thiamine diphosphate as cofactor.

The catalysed reaction is D-glyceraldehyde 3-phosphate + pyruvate + H(+) = 1-deoxy-D-xylulose 5-phosphate + CO2. It functions in the pathway metabolic intermediate biosynthesis; 1-deoxy-D-xylulose 5-phosphate biosynthesis; 1-deoxy-D-xylulose 5-phosphate from D-glyceraldehyde 3-phosphate and pyruvate: step 1/1. Its function is as follows. Catalyzes the acyloin condensation reaction between C atoms 2 and 3 of pyruvate and glyceraldehyde 3-phosphate to yield 1-deoxy-D-xylulose-5-phosphate (DXP). This is 1-deoxy-D-xylulose-5-phosphate synthase from Streptomyces sp. (strain CL190).